Reading from the N-terminus, the 632-residue chain is DNA ligase (632 aa).

Residues 45–49 (NEDYD) and 89–90 (SI) contribute to the NAD(+) site. Lys-127 acts as the N6-AMP-lysine intermediate in catalysis. Positions 143, 174, and 286 each coordinate NAD(+). The Zn(2+) site is built by Cys-374, Cys-377, Cys-390, and Cys-396. Positions 561–632 (DKRIVFTGKM…EADYLSKITM (72 aa)) constitute a BRCT domain.

It belongs to the NAD-dependent DNA ligase family. LigA subfamily. Requires Mg(2+) as cofactor. It depends on Mn(2+) as a cofactor.

The catalysed reaction is NAD(+) + (deoxyribonucleotide)n-3'-hydroxyl + 5'-phospho-(deoxyribonucleotide)m = (deoxyribonucleotide)n+m + AMP + beta-nicotinamide D-nucleotide.. Its function is as follows. DNA ligase that catalyzes the formation of phosphodiester linkages between 5'-phosphoryl and 3'-hydroxyl groups in double-stranded DNA using NAD as a coenzyme and as the energy source for the reaction. It is essential for DNA replication and repair of damaged DNA. The sequence is that of DNA ligase from Vesicomyosocius okutanii subsp. Calyptogena okutanii (strain HA).